Consider the following 555-residue polypeptide: Vacuolar fusion protein MON1 homolog A (555 aa).

Positions 1–12 (MAADMQRKRSSE) are enriched in basic and acidic residues. Positions 1–87 (MAADMQRKRS…RGPPPLPADM (87 aa)) are disordered. A phosphoserine mark is found at serine 31 and serine 56. Threonine 61 is modified (phosphothreonine). The residue at position 91 (serine 91) is a Phosphoserine. Residues 114 to 147 (PGSSEDWLDPPGAVGRPATEPPREGTAEGDEEDA) form a disordered region.

The protein belongs to the MON1/SAND family. Interacts with CCZ1. Found in a complex with RMC1, CCZ1, MON1A and MON1B. The MON1A-CCZ1B complex interacts with RIMOC1. The MON1A-CCZ1B complex interacts with RAB7A and this interaction is enhanced in the presence of RIMOC1.

In terms of biological role, plays an important role in membrane trafficking through the secretory apparatus. Not involved in endocytic trafficking to lysosomes. Acts in concert with CCZ1, as a guanine exchange factor (GEF) for RAB7, promotes the exchange of GDP to GTP, converting it from an inactive GDP-bound form into an active GTP-bound form. This chain is Vacuolar fusion protein MON1 homolog A (MON1A), found in Macaca fascicularis (Crab-eating macaque).